The chain runs to 205 residues: Guanylate kinase (205 aa).

Residues 5–183 enclose the Guanylate kinase-like domain; that stretch reads GTLYTVSAPS…ALTEFRSIVV (179 aa). 12–19 provides a ligand contact to ATP; sequence APSGAGKT.

This sequence belongs to the guanylate kinase family.

Its subcellular location is the cytoplasm. It carries out the reaction GMP + ATP = GDP + ADP. Functionally, essential for recycling GMP and indirectly, cGMP. The polypeptide is Guanylate kinase (Saccharophagus degradans (strain 2-40 / ATCC 43961 / DSM 17024)).